Consider the following 873-residue polypeptide: MAFQSPLTFNDEQLTVAQLKSQLDLFANAQKQAFLNHHPVTDLVLSRAEYMDLLLTRLWRYYGFSEIHNISLVAVGGYGRGELHPLSDIDILVLSKHKLPGELETKLSEFITLLWDLRLEVGHAVRTVEECAAIGREDLTVATNLQEARLLCGSENTFQDLKKVVLSDSFWPSETFYRAKIQEQRERHARYHDTTYNLEPDIKSTPGGLRDIHTLSWVARRHFGATSLLEMSRYGFLTDAEYRELVECQDFLWRVRFALHIELKRYDNRLTFAHQIQVAEHLGFKGEGNRGIEMMMKEFYRTLRRVAELNKMLLKLFDQAIINGGETEPAVIINEDFQRRGRLIEARKPALFQARPETILDMFLHIANDSTIDSVSPPTLRQLRTARRRLNKFLHTIPEAREKFMELVRHPNALHRAFSLMHKLGVLAAYLPQWSQIVGQMQFDLFHVYTVDEHSVRLLNHINTFSYAKNHDKHPICCEVYPRLQKKELLLLAAIFHDIGKGRGGDHSEIGEKEAYDFCIEHGLSKPEAKLVSWLVRHHLLMSVTAQRRDIYDPEVITEFAKQVRDEERLEYLVCLTVADICATNPELWNSWKRTLLAELFYSTQRALRRGLENPVDVRERIRHNQQLASALLRKEGFTAREIEVLWQRFKADYFLRHTHKQIAWHCEHILRMDNPEQPLVLMSKKATRGGTEVFVYTKDQHALFATVVAELDRRNFNVHDAQIMSSKDGYVLDTFMVLDQHGQAIDVDNHKAVIKHLMHVLTDGRPTKVKTRRTPYKLQHFKVKTKVDFLPTKSKKRTLMELVALDTPGLLAITGATFADMGFNLHGAKITTIGERAEDLFILTSENGGRLSEEQELQLREKLIHNIAELAP.

Residues 1–332 (MAFQSPLTFN…NGGETEPAVI (332 aa)) form a uridylyltransferase region. The uridylyl-removing stretch occupies residues 333-692 (INEDFQRRGR…MSKKATRGGT (360 aa)). An HD domain is found at 451-573 (VDEHSVRLLN…VRDEERLEYL (123 aa)). ACT domains follow at residues 693 to 773 (EVFV…VKTR) and 800 to 873 (LMEL…ELAP).

This sequence belongs to the GlnD family. It depends on Mg(2+) as a cofactor.

It carries out the reaction [protein-PII]-L-tyrosine + UTP = [protein-PII]-uridylyl-L-tyrosine + diphosphate. It catalyses the reaction [protein-PII]-uridylyl-L-tyrosine + H2O = [protein-PII]-L-tyrosine + UMP + H(+). Uridylyltransferase (UTase) activity is inhibited by glutamine, while glutamine activates uridylyl-removing (UR) activity. Modifies, by uridylylation and deuridylylation, the PII regulatory proteins (GlnB and homologs), in response to the nitrogen status of the cell that GlnD senses through the glutamine level. Under low glutamine levels, catalyzes the conversion of the PII proteins and UTP to PII-UMP and PPi, while under higher glutamine levels, GlnD hydrolyzes PII-UMP to PII and UMP (deuridylylation). Thus, controls uridylylation state and activity of the PII proteins, and plays an important role in the regulation of nitrogen assimilation and metabolism. In Vibrio vulnificus (strain YJ016), this protein is Bifunctional uridylyltransferase/uridylyl-removing enzyme.